We begin with the raw amino-acid sequence, 611 residues long: Menin (611 aa).

The interaction with FANCD2 stretch occupies residues glycine 214–threonine 390. The tract at residues arginine 460 to threonine 553 is disordered. The segment covering arginine 484 to leucine 500 has biased composition (basic and acidic residues). Residues serine 487 and serine 544 each carry the phosphoserine modification. Residue threonine 595 is modified to Phosphothreonine.

In terms of assembly, component of the MLL-HCF complex, at least composed of KMT2A/MLL1, MEN1, ASH2L, RBBP5, DPY30, WDR5, HCFC1 and HCFC2. Component of the menin-associated histone methyltransferase complex, at least composed of KMT2B/MLL4, MEN1, ASH2L, RBBP5, DPY30 and WDR5. Interacts with POLR2B. Interacts with POLR2A phosphorylated at 'Ser-5', but not with the unphosphorylated, nor 'Ser-2' phosphorylated POLR2A forms. Interacts with FANCD2 and DBF4. Interacts with SMAD3, but not with SMAD2, nor SMAD4. Directly interacts with NFKB1, NFKB2 and RELA. Interacts with JUND (via MBM motif); inhibits the interaction of JUND with MAPK10 and the phosphorylation of JUND by MAP kinases MAPK8 and MAPK10. Interacts with KMT2A (via MBM motif). The KMT2A-MEN1 complex interacts with PSIP1 with a greater affinity as MEN1 enhances interaction of KMT2A with PSIP1. In terms of tissue distribution, widely expressed, with high levels in hippocampus, cerebral cortex, testis and thymus (at protein level). Also expressed at high levels in pancreatic islets, ovary and bone marrow. In the brain, highest expression in hippocampus pyramidal nerve cells (at protein level). In the testis, may be expressed in spermatogonia (at protein level). Low expression, if any, in skeletal muscle.

Its subcellular location is the nucleus. In terms of biological role, essential component of a MLL/SET1 histone methyltransferase (HMT) complex, a complex that specifically methylates 'Lys-4' of histone H3 (H3K4). Functions as a transcriptional regulator. Binds to the TERT promoter and represses telomerase expression. Plays a role in TGFB1-mediated inhibition of cell-proliferation, possibly regulating SMAD3 transcriptional activity. Represses JUND-mediated transcriptional activation on AP1 sites, as well as that mediated by NFKB subunit RELA. Positively regulates HOXC8 and HOXC6 gene expression. May be involved in normal hematopoiesis through the activation of HOXA9 expression. May be involved in DNA repair. The protein is Menin (Men1) of Mus musculus (Mouse).